We begin with the raw amino-acid sequence, 147 residues long: Large ribosomal subunit protein uL15 (147 aa).

Over residues Met-1–Gly-28 the composition is skewed to basic residues. The disordered stretch occupies residues Met-1–Asn-43. Positions Gly-29–Gly-38 are enriched in gly residues.

The protein belongs to the universal ribosomal protein uL15 family. In terms of assembly, part of the 50S ribosomal subunit.

Binds to the 23S rRNA. This Pyrococcus horikoshii (strain ATCC 700860 / DSM 12428 / JCM 9974 / NBRC 100139 / OT-3) protein is Large ribosomal subunit protein uL15.